The primary structure comprises 98 residues: Large ribosomal subunit protein uL23 (98 aa).

The protein belongs to the universal ribosomal protein uL23 family. As to quaternary structure, part of the 50S ribosomal subunit. Contacts protein L29, and trigger factor when it is bound to the ribosome.

Its function is as follows. One of the early assembly proteins it binds 23S rRNA. One of the proteins that surrounds the polypeptide exit tunnel on the outside of the ribosome. Forms the main docking site for trigger factor binding to the ribosome. The protein is Large ribosomal subunit protein uL23 of Streptococcus sanguinis (strain SK36).